Consider the following 491-residue polypeptide: Probable cytosol aminopeptidase (491 aa).

Positions 263 and 268 each coordinate Mn(2+). K275 is an active-site residue. 3 residues coordinate Mn(2+): D286, D345, and E347. Residue R349 is part of the active site.

The protein belongs to the peptidase M17 family. Mn(2+) is required as a cofactor.

The protein localises to the cytoplasm. It catalyses the reaction Release of an N-terminal amino acid, Xaa-|-Yaa-, in which Xaa is preferably Leu, but may be other amino acids including Pro although not Arg or Lys, and Yaa may be Pro. Amino acid amides and methyl esters are also readily hydrolyzed, but rates on arylamides are exceedingly low.. It carries out the reaction Release of an N-terminal amino acid, preferentially leucine, but not glutamic or aspartic acids.. Presumably involved in the processing and regular turnover of intracellular proteins. Catalyzes the removal of unsubstituted N-terminal amino acids from various peptides. The polypeptide is Probable cytosol aminopeptidase (Haemophilus influenzae (strain PittGG)).